Consider the following 402-residue polypeptide: Acetate kinase (402 aa).

Asn10 provides a ligand contact to Mg(2+). Residue Lys17 coordinates ATP. Position 89 (Arg89) interacts with substrate. The active-site Proton donor/acceptor is Asp148. Residues 208–212, 283–285, and 334–338 each bind ATP; these read HLGNG, DCR, and GIGEN. Glu389 provides a ligand contact to Mg(2+).

Belongs to the acetokinase family. As to quaternary structure, homodimer. Mg(2+) is required as a cofactor. The cofactor is Mn(2+).

The protein localises to the cytoplasm. It carries out the reaction acetate + ATP = acetyl phosphate + ADP. It participates in metabolic intermediate biosynthesis; acetyl-CoA biosynthesis; acetyl-CoA from acetate: step 1/2. Functionally, catalyzes the formation of acetyl phosphate from acetate and ATP. Can also catalyze the reverse reaction. The protein is Acetate kinase of Actinobacillus pleuropneumoniae serotype 5b (strain L20).